Here is a 245-residue protein sequence, read N- to C-terminus: 1-acyl-sn-glycerol-3-phosphate acyltransferase (245 aa).

Positions 73–78 match the HXXXXD motif motif; the sequence is HQNNYD.

The protein belongs to the 1-acyl-sn-glycerol-3-phosphate acyltransferase family.

It is found in the cell inner membrane. It carries out the reaction a 1-acyl-sn-glycero-3-phosphate + an acyl-CoA = a 1,2-diacyl-sn-glycero-3-phosphate + CoA. Its pathway is phospholipid metabolism; CDP-diacylglycerol biosynthesis; CDP-diacylglycerol from sn-glycerol 3-phosphate: step 2/3. Its function is as follows. Converts lysophosphatidic acid (LPA) into phosphatidic acid by incorporating an acyl moiety at the 2 position. This enzyme can utilize either acyl-CoA or acyl-acyl-carrier-protein as the fatty acyl donor. The polypeptide is 1-acyl-sn-glycerol-3-phosphate acyltransferase (plsC) (Salmonella typhi).